A 269-amino-acid polypeptide reads, in one-letter code: NAD kinase (269 aa).

Aspartate 45 functions as the Proton acceptor in the catalytic mechanism. NAD(+)-binding positions include 45–46 (DG), 122–123 (NE), arginine 149, aspartate 151, and alanine 186.

Belongs to the NAD kinase family. The cofactor is a divalent metal cation.

It is found in the cytoplasm. It catalyses the reaction NAD(+) + ATP = ADP + NADP(+) + H(+). In terms of biological role, involved in the regulation of the intracellular balance of NAD and NADP, and is a key enzyme in the biosynthesis of NADP. Catalyzes specifically the phosphorylation on 2'-hydroxyl of the adenosine moiety of NAD to yield NADP. The chain is NAD kinase from Staphylococcus saprophyticus subsp. saprophyticus (strain ATCC 15305 / DSM 20229 / NCIMB 8711 / NCTC 7292 / S-41).